The chain runs to 150 residues: MQVILLDKVVNLGGLGDIVKVKDGYARNFLIPTGAARRATASAKAEFEAKRVELEKQAAEKLAAAQQLGEKLNGVNVKLTQKAGVDGRLFGSVTNADIAEELTKAGFAVAKSQVRLVNGPIKTVGDATVVVALHTDVSVEVTVSVYGDHS.

Belongs to the bacterial ribosomal protein bL9 family.

Its function is as follows. Binds to the 23S rRNA. This chain is Large ribosomal subunit protein bL9, found in Delftia acidovorans (strain DSM 14801 / SPH-1).